The chain runs to 379 residues: Cytochrome bd-I ubiquinol oxidase subunit 2 (379 aa).

Residue Met-1 is modified to N-formylmethionine. Topologically, residues 1–8 (MIDYEVLR) are cytoplasmic. A helical membrane pass occupies residues 9–28 (FIWWLLVGVLLIGFAVTDGF). The Periplasmic portion of the chain corresponds to 29-79 (DMGVGMLTRFLGRNDTERRIMINSIAPHWDGNQVWLITAGGALFAAWPMVY). A helical membrane pass occupies residues 80–99 (AAAFSGFYVAMILVLASLFF). The Cytoplasmic segment spans residues 100 to 122 (RPVGFDYRSKIEETRWRNMWDWG). Residues 123 to 142 (IFIGSFVPPLVIGVAFGNLL) traverse the membrane as a helical segment. At 143–164 (QGVPFNVDEYLRLYYTGNFFQL) the chain is on the periplasmic side. The helical transmembrane segment at 165–184 (LNPFGLLAGVVSVGMIITQG) threads the bilayer. Over 185–205 (ATYLQMRTVGELHLRTRATAQ) the chain is Cytoplasmic. The helical transmembrane segment at 206–225 (VAALVTLVCFALAGVWVMYG) threads the bilayer. The Periplasmic segment spans residues 226-262 (IDGYVVKSTMDHYAASNPLNKEVVREAGAWLVNFNNT). Residues 263–282 (PILWAIPALGVVLPLLTILT) form a helical membrane-spanning segment. Residues 283-292 (ARMDKAAWAF) are Cytoplasmic-facing. The helical transmembrane segment at 293–312 (VFSSLTLACIILTAGIAMFP) threads the bilayer. At 313–336 (FVMPSSTMMNASLTMWDATSSQLT) the chain is on the periplasmic side. A helical transmembrane segment spans residues 337–356 (LNVMTWVAVVLVPIILLYTA). Topologically, residues 357–379 (WCYWKMFGRITKEDIERNTHSLY) are cytoplasmic.

The protein belongs to the cytochrome ubiquinol oxidase subunit 2 family. Heterodimer of subunits I and II. It depends on heme b as a cofactor. Requires heme d cis-diol as cofactor.

The protein localises to the cell inner membrane. The enzyme catalyses 2 a ubiquinol + O2(in) + 4 H(+)(in) = 2 a ubiquinone + 2 H2O(in) + 4 H(+)(out). It functions in the pathway energy metabolism; oxidative phosphorylation. Functionally, a terminal oxidase that produces a proton motive force by the vectorial transfer of protons across the inner membrane. It is the component of the aerobic respiratory chain of E.coli that predominates when cells are grown at low aeration. Generates a proton motive force using protons and electrons from opposite sides of the membrane to generate H(2)O, transferring 1 proton/electron. This Escherichia coli O157:H7 protein is Cytochrome bd-I ubiquinol oxidase subunit 2 (cydB).